The sequence spans 310 residues: MSKILVFGHQNPDSDAIGSSMAYAYLKRQLGVDAQAVALGNPNEETAFVLDYFGIQAPPVVKSAQAEGAKQVILTDHNEFQQSIADIREVEVVEVVDHHRVANFETANPLYMRLEPVGSASSIVYRLYKENGVAIPKEIAGVMLSGLISDTLLLKSPTTHASDPAVAEDLAKIAGVDLQEYGLAMLKAGTNLASKTAAQLVDIDAKTFELNGSQVRVAQVNTVDINEVLERQNEIEEAIKASQAANGYSDFVLMITDILNSNSEILALGNNTDKVEAAFNFTLKNNHAFLAGAVSRKKQVVPQLTESFNG.

Mn(2+) contacts are provided by H9, D13, D15, D76, H98, and D150.

This sequence belongs to the PPase class C family. As to quaternary structure, homodimer. Requires Mn(2+) as cofactor.

It is found in the cytoplasm. It carries out the reaction diphosphate + H2O = 2 phosphate + H(+). This chain is Probable manganese-dependent inorganic pyrophosphatase (ppaC), found in Streptococcus mutans serotype c (strain ATCC 700610 / UA159).